The chain runs to 505 residues: RNA-splicing ligase RtcB homolog (505 aa).

Residues D119, C122, H227, H259, and H353 each coordinate Mn(2+). 226–230 contributes to the GMP binding site; sequence NHYAE. GMP contacts are provided by residues 353-354, 402-405, S409, 428-431, and K504; these read HN, GGTM, and HGAG. Catalysis depends on H428, which acts as the GMP-histidine intermediate.

Belongs to the RtcB family. In terms of assembly, catalytic component of the tRNA-splicing ligase complex. Mn(2+) serves as cofactor.

It localises to the nucleus. The protein resides in the cytoplasm. The enzyme catalyses a 3'-end 3'-phospho-ribonucleotide-RNA + a 5'-end dephospho-ribonucleoside-RNA + GTP = a ribonucleotidyl-ribonucleotide-RNA + GMP + diphosphate. The catalysed reaction is a 3'-end 2',3'-cyclophospho-ribonucleotide-RNA + a 5'-end dephospho-ribonucleoside-RNA + GTP + H2O = a ribonucleotidyl-ribonucleotide-RNA + GMP + diphosphate + H(+). In terms of biological role, catalytic subunit of the tRNA-splicing ligase complex that acts by directly joining spliced tRNA halves to mature-sized tRNAs by incorporating the precursor-derived splice junction phosphate into the mature tRNA as a canonical 3',5'-phosphodiester. May act as an RNA ligase with broad substrate specificity, and may function toward other RNAs. The chain is RNA-splicing ligase RtcB homolog from Danio rerio (Zebrafish).